The primary structure comprises 79 residues: RNA-binding protein Hfq (79 aa).

The region spanning 10 to 69 is the Sm domain; it reads DPFLNALRKEHVPVSIYLVNGIKLQGNIESFDQYVVLLRNTVTQMVYKHAISTVVPARAV.

It belongs to the Hfq family. Homohexamer.

In terms of biological role, RNA chaperone that binds small regulatory RNA (sRNAs) and mRNAs to facilitate mRNA translational regulation in response to envelope stress, environmental stress and changes in metabolite concentrations. Also binds with high specificity to tRNAs. The sequence is that of RNA-binding protein Hfq from Ralstonia nicotianae (strain ATCC BAA-1114 / GMI1000) (Ralstonia solanacearum).